Reading from the N-terminus, the 261-residue chain is ATP synthase subunit a (261 aa).

The next 5 helical transmembrane spans lie at 28-48, 89-109, 140-160, 203-223, and 229-249; these read AVHL…LTIF, IAPL…MDWV, NITF…SIKV, LFGN…IGVF, and FLWA…FMML.

It belongs to the ATPase A chain family. In terms of assembly, F-type ATPases have 2 components, CF(1) - the catalytic core - and CF(0) - the membrane proton channel. CF(1) has five subunits: alpha(3), beta(3), gamma(1), delta(1), epsilon(1). CF(0) has three main subunits: a(1), b(2) and c(9-12). The alpha and beta chains form an alternating ring which encloses part of the gamma chain. CF(1) is attached to CF(0) by a central stalk formed by the gamma and epsilon chains, while a peripheral stalk is formed by the delta and b chains.

Its subcellular location is the cell inner membrane. Key component of the proton channel; it plays a direct role in the translocation of protons across the membrane. This Colwellia psychrerythraea (strain 34H / ATCC BAA-681) (Vibrio psychroerythus) protein is ATP synthase subunit a.